A 330-amino-acid chain; its full sequence is Calponin-3 (330 aa).

Lys23 is modified (N6-acetyllysine). A Calponin-homology (CH) domain is found at 26–130 (QQAEEDLRNW…TLVALAGLAK (105 aa)). An N6-methyllysine modification is found at Lys158. Calponin-like repeat units lie at residues 164-189 (IGLQ…RHLY), 204-229 (ISLQ…RDIY), and 243-268 (ISLQ…RQVY). Residues 279-330 (PVIHNGSQGTGTNGSEISDSDYQAEYPDEYHGEYPDDYPREYQYGDDQGIDY) form a disordered region. The span at 306–318 (DEYHGEYPDDYPR) shows a compositional bias: basic and acidic residues.

It belongs to the calponin family.

Functionally, thin filament-associated protein that is implicated in the regulation and modulation of smooth muscle contraction. It is capable of binding to actin, calmodulin and tropomyosin. The interaction of calponin with actin inhibits the actomyosin Mg-ATPase activity. This is Calponin-3 (Cnn3) from Mus musculus (Mouse).